Consider the following 550-residue polypeptide: CCR4-NOT transcription complex subunit 6-like-A (550 aa).

Residues 1–148 (MPKEKYDPPD…LYQEPDGMRK (148 aa)) are required for interaction with cnot1, cnot3 and cnot7. LRR repeat units lie at residues 52 to 73 (HLTVLHLSDNNLSRIPPDIAKL), 75 to 96 (NLVYLDLSSNKLRSLPAELGNV), 98 to 120 (SLRELLLNNNLLRVLPFELGRLF), and 121 to 143 (RLQTLGLKGNPLSQDILSLYQEP). The interval 153–550 (MLDNLSVHPE…INGVHLPSRR (398 aa)) is nuclease domain. Glu235 serves as a coordination point for Mg(2+). Positions 235, 271, 355, and 360 each coordinate substrate. Position 405 (Asp405) interacts with Mg(2+). The active-site Proton donor/acceptor is the Asp405. Substrate contacts are provided by Asn407, Asn474, and Phe479.

Belongs to the CCR4/nocturin family. Component of the CCR4-NOT complex. Requires Mg(2+) as cofactor.

It is found in the cytoplasm. Its subcellular location is the nucleus. The catalysed reaction is Exonucleolytic cleavage of poly(A) to 5'-AMP.. Functionally, poly(A) nuclease with 3'-5' RNase activity. Catalytic component of the CCR4-NOT complex which is one of the major cellular mRNA deadenylases and is linked to various cellular processes including bulk mRNA degradation, miRNA-mediated repression, translational repression during translational initiation and general transcription regulation. Additional complex functions may be a consequence of its influence on mRNA expression. This Xenopus laevis (African clawed frog) protein is CCR4-NOT transcription complex subunit 6-like-A (cnot6l-a).